The sequence spans 208 residues: Uracil phosphoribosyltransferase (208 aa).

5-phospho-alpha-D-ribose 1-diphosphate-binding positions include arginine 77, arginine 102, and 129–137 (DPMLATGNS). Residues isoleucine 193 and 198–200 (GDA) contribute to the uracil site. Aspartate 199 provides a ligand contact to 5-phospho-alpha-D-ribose 1-diphosphate.

It belongs to the UPRTase family. Mg(2+) is required as a cofactor.

It catalyses the reaction UMP + diphosphate = 5-phospho-alpha-D-ribose 1-diphosphate + uracil. It functions in the pathway pyrimidine metabolism; UMP biosynthesis via salvage pathway; UMP from uracil: step 1/1. With respect to regulation, allosterically activated by GTP. In terms of biological role, catalyzes the conversion of uracil and 5-phospho-alpha-D-ribose 1-diphosphate (PRPP) to UMP and diphosphate. In Mycoplasmopsis agalactiae (strain NCTC 10123 / CIP 59.7 / PG2) (Mycoplasma agalactiae), this protein is Uracil phosphoribosyltransferase.